Here is a 281-residue protein sequence, read N- to C-terminus: NADPH-dependent 7-cyano-7-deazaguanine reductase (281 aa).

Substrate is bound at residue 87–89 (IES). An NADPH-binding site is contributed by 89–90 (SK). Cys188 serves as the catalytic Thioimide intermediate. Catalysis depends on Asp195, which acts as the Proton donor. 227-228 (HE) is a substrate binding site. 256 to 257 (RG) contacts NADPH. A disordered region spans residues 261-281 (INPYRSTEQDKPAHNNRMARQ).

The protein belongs to the GTP cyclohydrolase I family. QueF type 2 subfamily. Homodimer.

The protein localises to the cytoplasm. It carries out the reaction 7-aminomethyl-7-carbaguanine + 2 NADP(+) = 7-cyano-7-deazaguanine + 2 NADPH + 3 H(+). It participates in tRNA modification; tRNA-queuosine biosynthesis. Catalyzes the NADPH-dependent reduction of 7-cyano-7-deazaguanine (preQ0) to 7-aminomethyl-7-deazaguanine (preQ1). The protein is NADPH-dependent 7-cyano-7-deazaguanine reductase of Vibrio campbellii (strain ATCC BAA-1116).